The primary structure comprises 53 residues: Large ribosomal subunit protein eL40 (53 aa).

The protein belongs to the eukaryotic ribosomal protein eL40 family.

In Staphylothermus marinus (strain ATCC 43588 / DSM 3639 / JCM 9404 / F1), this protein is Large ribosomal subunit protein eL40.